Reading from the N-terminus, the 143-residue chain is MSTEFPTKNGINREWHVIDAENVVLGKLASRAAMILMGKHKPTYTPFIDAGDHVVVINAEKVKVTGRKEEDKLYRHFTGYPGGLVEKSLKRVRAEKPTRIVEDAIAGMLPKNKLGKQMYRKLNVYAGSKHPHAAQQPVALTVK.

The protein belongs to the universal ribosomal protein uL13 family. Part of the 50S ribosomal subunit.

This protein is one of the early assembly proteins of the 50S ribosomal subunit, although it is not seen to bind rRNA by itself. It is important during the early stages of 50S assembly. The sequence is that of Large ribosomal subunit protein uL13 from Solibacter usitatus (strain Ellin6076).